Reading from the N-terminus, the 231-residue chain is Flagellar L-ring protein (231 aa).

Residues 1–18 form the signal peptide; it reads MSRLLIVVSLSSAFALAG. Cysteine 19 carries the N-palmitoyl cysteine lipid modification. A lipid anchor (S-diacylglycerol cysteine) is attached at cysteine 19.

It belongs to the FlgH family. The basal body constitutes a major portion of the flagellar organelle and consists of four rings (L,P,S, and M) mounted on a central rod.

The protein resides in the cell outer membrane. Its subcellular location is the bacterial flagellum basal body. In terms of biological role, assembles around the rod to form the L-ring and probably protects the motor/basal body from shearing forces during rotation. The chain is Flagellar L-ring protein from Stutzerimonas stutzeri (strain A1501) (Pseudomonas stutzeri).